A 119-amino-acid polypeptide reads, in one-letter code: DNA-binding protein Maeo_0998 (119 aa).

The span at Met1–Met11 shows a compositional bias: basic and acidic residues. The segment at Met1–Arg36 is disordered. A compositionally biased stretch (low complexity) spans Gln15 to Gln32.

The protein belongs to the PDCD5 family.

The polypeptide is DNA-binding protein Maeo_0998 (Methanococcus aeolicus (strain ATCC BAA-1280 / DSM 17508 / OCM 812 / Nankai-3)).